Reading from the N-terminus, the 262-residue chain is MNDEISDLINQAVSNILINSSSENKLKKLIKTHDVKIHFVPRNYRIFGGILQSMNIQFGNFLEEFMTLLIKSDGRYDILEEYSGKKSNKFQLSTSNDNRIDQFISFCQRSDSINLDEEFPKLLNEVKNDNDTNLSSISHDIDILFRNKETGVIYYLEVKYNDDHDTGKFVDINRKFIKTYAYLVREFPNTEIKPILFFFNNKKMKGNIYVPENTNIRRGKSFFDEFLKIKYEDVDSYIRNLSESPDNIKAFDDLYRKIMAMK.

It carries out the reaction Endonucleolytic cleavage of DNA to give specific double-stranded fragments with terminal 5'-phosphates.. A P subtype restriction enzyme that recognizes the double-stranded sequence 5'-GANTC-3' and cleaves after G-1. This is Type II restriction enzyme HinfI (hinfIR) from Haemophilus influenzae.